The primary structure comprises 152 residues: CASP-like protein 5B3 (152 aa).

Residues 1 to 21 are Cytoplasmic-facing; sequence MIDIPGTPGTLTGLVLRISQC. Helical transmembrane passes span 22-42 and 43-63; these read VFAA…SFTA and FCYL…LAIL. The Extracellular segment spans residues 64–77; sequence DTFALVRKKTLLSP. A helical transmembrane segment spans residues 78–98; that stretch reads VLVSLFVVGDWVTSTLSLAGA. Topologically, residues 99–127 are cytoplasmic; sequence SSSAGITVLYFGDLGSCSFEAECWKYQLS. A helical transmembrane segment spans residues 128–148; the sequence is VALAFLCWITIAVSSLTTLWL. The Extracellular portion of the chain corresponds to 149 to 152; the sequence is LASA.

The protein belongs to the Casparian strip membrane proteins (CASP) family. In terms of assembly, homodimer and heterodimers. As to expression, expressed in the stele of the root and in leaves.

It localises to the cell membrane. This chain is CASP-like protein 5B3, found in Arabidopsis thaliana (Mouse-ear cress).